The following is a 364-amino-acid chain: Lipoyl synthase, mitochondrial (364 aa).

Positions 99, 104, 110, 130, 134, 137, and 345 each coordinate [4Fe-4S] cluster. The region spanning 116–334 (HSTQTATIML…EQRGNELGFL (219 aa)) is the Radical SAM core domain.

This sequence belongs to the radical SAM superfamily. Lipoyl synthase family. [4Fe-4S] cluster is required as a cofactor.

The protein localises to the mitochondrion. The catalysed reaction is [[Fe-S] cluster scaffold protein carrying a second [4Fe-4S](2+) cluster] + N(6)-octanoyl-L-lysyl-[protein] + 2 oxidized [2Fe-2S]-[ferredoxin] + 2 S-adenosyl-L-methionine + 4 H(+) = [[Fe-S] cluster scaffold protein] + N(6)-[(R)-dihydrolipoyl]-L-lysyl-[protein] + 4 Fe(3+) + 2 hydrogen sulfide + 2 5'-deoxyadenosine + 2 L-methionine + 2 reduced [2Fe-2S]-[ferredoxin]. It participates in protein modification; protein lipoylation via endogenous pathway; protein N(6)-(lipoyl)lysine from octanoyl-[acyl-carrier-protein]: step 2/2. Functionally, catalyzes the radical-mediated insertion of two sulfur atoms into the C-6 and C-8 positions of the octanoyl moiety bound to the lipoyl domains of lipoate-dependent enzymes, thereby converting the octanoylated domains into lipoylated derivatives. The polypeptide is Lipoyl synthase, mitochondrial (Drosophila mojavensis (Fruit fly)).